The primary structure comprises 204 residues: Thymidylate kinase (204 aa).

Residue 12–19 (GVDGAGKS) participates in ATP binding.

It belongs to the thymidylate kinase family.

The catalysed reaction is dTMP + ATP = dTDP + ADP. Its function is as follows. Phosphorylation of dTMP to form dTDP in both de novo and salvage pathways of dTTP synthesis. This chain is Thymidylate kinase, found in Thiobacillus denitrificans (strain ATCC 25259 / T1).